We begin with the raw amino-acid sequence, 203 residues long: Chaperonin-like RbcX protein 2, chloroplastic (203 aa).

A chloroplast-targeting transit peptide spans 1-78 (MVSAWFVVGS…RKSKKLLIVN (78 aa)).

This sequence belongs to the RbcX family. In terms of assembly, homodimer. Interacts with rbcL, atpB and RBCS-1B.

It is found in the plastid. Its subcellular location is the chloroplast stroma. Functionally, chaperone involved in RuBisCO assembly process. The chain is Chaperonin-like RbcX protein 2, chloroplastic from Arabidopsis thaliana (Mouse-ear cress).